A 332-amino-acid polypeptide reads, in one-letter code: Cell growth regulator with RING finger domain protein 1 (332 aa).

The segment at 274-309 (CVVCQNGTVNWVLLPCRHTCLCDGCVKYFQQCPMCR) adopts an RING-type zinc-finger fold.

In terms of tissue distribution, ubiquitously expressed with high expression in testis and the cerebellum.

The protein resides in the nucleus. Its subcellular location is the endoplasmic reticulum. Functionally, able to inhibit growth in several cell lines. The sequence is that of Cell growth regulator with RING finger domain protein 1 (CGRRF1) from Homo sapiens (Human).